We begin with the raw amino-acid sequence, 1259 residues long: Protein flightless-1 homolog (1259 aa).

15 LRR repeats span residues 7 to 32 (LPFIRGVDLSGNDFKGGNFPEHVKSM), 33 to 55 (TSLRWLKLNRTGLCYLPEELASL), 56 to 78 (QKLEHLSVSHNSLTTLHGELSSL), 80 to 103 (NLRAVVARANNLKNSGVPDDIFQL), 104 to 126 (DDLSVLDLSHNQLTEIPRDLENS), 128 to 149 (NMLVLNLSHNSIDNIPNQLFIN), 150 to 173 (LTDLLYLDLSDNNLDSLPPQMRRL), 176 to 201 (LQTLILNNNPLMHAQLRQLPVMVSLQ), 222 to 245 (LSNLTDVDLSCNDLTRVPECLYSL), 247 to 268 (NLKRLNLSSNQISELSLCIDQW), 269 to 291 (TKLETLNLSRNQLTSLPSAICKL), 293 to 316 (KLKKLYVNSNKIDFDGLPSGVGKL), 317 to 339 (SNLVEFMAANNNLELVPEGLCRC), 340 to 363 (GKLKKLVLNKNRLVTLPEAIHFLT), and 365 to 385 (LEVLDVRENPNLVMPPKPVDR). Gelsolin-like repeat units follow at residues 509 to 589 (IPIQ…SEEF), 628 to 702 (NIRL…PEFW), 757 to 830 (DVVP…CQVF), and 1170 to 1225 (EKCS…RSKD).

As to expression, expressed in ventricular cardiomyocytes, where it particularly localizes to intercalated disks and costamere-like structures (at protein level).

The protein localises to the nucleus. The protein resides in the cytoplasm. Its subcellular location is the cytoskeleton. It is found in the microtubule organizing center. It localises to the centrosome. The protein localises to the cell junction. The protein resides in the focal adhesion. Functionally, is a regulator of actin polymerization, required for proper myofibril organization and the assembly of cardiomyocyte cell adhesion complexes. Is a regulator of the length of sarcomeric thin filaments. Regulates cytoskeletal rearrangements involved in cytokinesis and cell migration, by inhibiting Rac1-dependent paxillin phosphorylation. May play a role as coactivator in transcriptional activation by hormone-activated nuclear receptors (NR) and acts in cooperation with NCOA2 and CARM1. Involved in estrogen hormone signaling. This is Protein flightless-1 homolog from Danio rerio (Zebrafish).